The primary structure comprises 459 residues: MIFYNSLSGQKEQFKPIEANKIKMYACGVTVYDDCHIGHARTYIAFDVINRYFKYRGYDVTLVRNITNIDDKIIKRANENGESTTELVERNIKAMHDVFARLNILKPSKEPRATETIPEMVAMIETLIKKGYAYQGANGDVFYRVTKFADYGKLSKQNLEALQQGSRVDVVEEKENPMDFVLWKMAKEGEPAWDSPWGAGRPGWHIECSAMSKKLLGNTFDIHAGGSDLRFPHHENEIAQSEACNECTFANYWLHSGMVKVNAEKMSKSLNNFFTIVEVLEEYHPEVVRYFLASTVYRSEINYSKENLENAKASVERLFNALRDIEPIEVNLPDDASEYEEKFIKAMDNDFNTPEALAVLFSLAKEINTLKTTNKYKASGYAYLLRKLCDVLGILFTDIEEYFKQGDGADASEIEKLIAERTQAKKDKNYARADEIRNQLQQQGIILEDSATGTTWKKG.

C27 is a binding site for Zn(2+). The short motif at 29–39 (VTVYDDCHIGH) is the 'HIGH' region element. Zn(2+) is bound by residues C208, H233, and E237. The short motif at 265-269 (KMSKS) is the 'KMSKS' region element. K268 is a binding site for ATP.

It belongs to the class-I aminoacyl-tRNA synthetase family. As to quaternary structure, monomer. It depends on Zn(2+) as a cofactor.

The protein resides in the cytoplasm. The catalysed reaction is tRNA(Cys) + L-cysteine + ATP = L-cysteinyl-tRNA(Cys) + AMP + diphosphate. The protein is Cysteine--tRNA ligase of Francisella tularensis subsp. mediasiatica (strain FSC147).